Reading from the N-terminus, the 221-residue chain is ATP-dependent dethiobiotin synthetase BioD (221 aa).

12–17 (EVGKTV) is a binding site for ATP. Position 16 (T16) interacts with Mg(2+). K39 is a catalytic residue. Position 43 (T43) interacts with substrate. Residues D47, 105–108 (EGLG), and 165–166 (SC) contribute to the ATP site. Mg(2+) contacts are provided by D47 and E105.

This sequence belongs to the dethiobiotin synthetase family. Homodimer. Requires Mg(2+) as cofactor.

Its subcellular location is the cytoplasm. The enzyme catalyses (7R,8S)-7,8-diammoniononanoate + CO2 + ATP = (4R,5S)-dethiobiotin + ADP + phosphate + 3 H(+). It catalyses the reaction (7R,8S)-8-amino-7-(carboxyamino)nonanoate + ATP = (4R,5S)-dethiobiotin + ADP + phosphate + H(+). The protein operates within cofactor biosynthesis; biotin biosynthesis; biotin from 7,8-diaminononanoate: step 1/2. Functionally, catalyzes a mechanistically unusual reaction, the ATP-dependent insertion of CO2 between the N7 and N8 nitrogen atoms of 7,8-diaminopelargonic acid (DAPA, also called 7,8-diammoniononanoate) to form a ureido ring. This cyanobacterium does not encode bioA (which catalyzes the formation of the precursor for this reaction in the cannonical pathway), instead it encodes bioU, which replaces bioA and also performs the first half of the cannonical BioD reaction. Thus in this organism BioD has a different substrate. The polypeptide is ATP-dependent dethiobiotin synthetase BioD (Crocosphaera subtropica (strain ATCC 51142 / BH68) (Cyanothece sp. (strain ATCC 51142))).